Here is an 89-residue protein sequence, read N- to C-terminus: Small ribosomal subunit protein uS15 (89 aa).

It belongs to the universal ribosomal protein uS15 family. Part of the 30S ribosomal subunit. Forms a bridge to the 50S subunit in the 70S ribosome, contacting the 23S rRNA.

Functionally, one of the primary rRNA binding proteins, it binds directly to 16S rRNA where it helps nucleate assembly of the platform of the 30S subunit by binding and bridging several RNA helices of the 16S rRNA. In terms of biological role, forms an intersubunit bridge (bridge B4) with the 23S rRNA of the 50S subunit in the ribosome. This Methylorubrum extorquens (strain CM4 / NCIMB 13688) (Methylobacterium extorquens) protein is Small ribosomal subunit protein uS15.